The sequence spans 646 residues: Autophagy-related protein 28 (646 aa).

Disordered stretches follow at residues 1-148 and 221-245; these read MSSP…HVDN and PTRS…RGLK. The span at 12 to 21 shows a compositional bias: polar residues; it reads SPRQRLSNPL. A compositionally biased stretch (low complexity) spans 63 to 75; the sequence is SATSTRRSSSPAS. Positions 106 to 122 are enriched in polar residues; it reads MMMNQHPSRQSTVSSHG. Coiled-coil stretches lie at residues 283 to 350 and 485 to 514; these read LDKM…MEDV and QQAA…ESKH. 2 disordered regions span residues 475 to 494 and 546 to 612; these read SQAG…SQLS and AAAV…RGSA. Composition is skewed to basic and acidic residues over residues 557 to 575 and 588 to 597; these read STDK…SHDE and RMEDHDHDPP.

This sequence belongs to the ATG28 family.

Its subcellular location is the cytoplasm. It localises to the vacuole membrane. It is found in the cytoplasmic vesicle membrane. Its function is as follows. Required for the autophagic degradation of peroxisomes called pexophagy, but not essential for general autophagy. Involved in resistance to elevated pH. The polypeptide is Autophagy-related protein 28 (Gibberella zeae (strain ATCC MYA-4620 / CBS 123657 / FGSC 9075 / NRRL 31084 / PH-1) (Wheat head blight fungus)).